We begin with the raw amino-acid sequence, 202 residues long: Holliday junction branch migration complex subunit RuvA (202 aa).

Positions Met1 to Ser64 are domain I. Positions Ser65 to Leu143 are domain II. Positions Pro144 to Leu152 are flexible linker. A domain III region spans residues Leu152 to Gln202.

This sequence belongs to the RuvA family. Homotetramer. Forms an RuvA(8)-RuvB(12)-Holliday junction (HJ) complex. HJ DNA is sandwiched between 2 RuvA tetramers; dsDNA enters through RuvA and exits via RuvB. An RuvB hexamer assembles on each DNA strand where it exits the tetramer. Each RuvB hexamer is contacted by two RuvA subunits (via domain III) on 2 adjacent RuvB subunits; this complex drives branch migration. In the full resolvosome a probable DNA-RuvA(4)-RuvB(12)-RuvC(2) complex forms which resolves the HJ.

Its subcellular location is the cytoplasm. In terms of biological role, the RuvA-RuvB-RuvC complex processes Holliday junction (HJ) DNA during genetic recombination and DNA repair, while the RuvA-RuvB complex plays an important role in the rescue of blocked DNA replication forks via replication fork reversal (RFR). RuvA specifically binds to HJ cruciform DNA, conferring on it an open structure. The RuvB hexamer acts as an ATP-dependent pump, pulling dsDNA into and through the RuvAB complex. HJ branch migration allows RuvC to scan DNA until it finds its consensus sequence, where it cleaves and resolves the cruciform DNA. This chain is Holliday junction branch migration complex subunit RuvA, found in Desulforudis audaxviator (strain MP104C).